The chain runs to 202 residues: Imidazoleglycerol-phosphate dehydratase (202 aa).

This sequence belongs to the imidazoleglycerol-phosphate dehydratase family.

The protein resides in the cytoplasm. The catalysed reaction is D-erythro-1-(imidazol-4-yl)glycerol 3-phosphate = 3-(imidazol-4-yl)-2-oxopropyl phosphate + H2O. It functions in the pathway amino-acid biosynthesis; L-histidine biosynthesis; L-histidine from 5-phospho-alpha-D-ribose 1-diphosphate: step 6/9. This chain is Imidazoleglycerol-phosphate dehydratase, found in Rhodopirellula baltica (strain DSM 10527 / NCIMB 13988 / SH1).